Reading from the N-terminus, the 615-residue chain is Chaperone protein HscA homolog (615 aa).

This sequence belongs to the heat shock protein 70 family.

In terms of biological role, chaperone involved in the maturation of iron-sulfur cluster-containing proteins. Has a low intrinsic ATPase activity which is markedly stimulated by HscB. The chain is Chaperone protein HscA homolog from Aeromonas salmonicida (strain A449).